Here is a 226-residue protein sequence, read N- to C-terminus: MLTWLQRDSLTFPPLAKAMREPNGLLAAGGDLSAERLIQAYRHGCFPWFSQGQPILWWSPDPRTVIFPDELHISRSLGKLLRQQRYTVTFDQDFAAVIQACAAPRAYADGTWITQSIQNAYLALHQRGYAHSVEVWDNGELVGGLYGLAMGQLFFGESMFSRADNASKFGFATLTRQLQAWGFVLIDCQMPNDHLHSLGARAISRSDFAGFLRDHLDQPNTGPWVS.

This sequence belongs to the L/F-transferase family.

It localises to the cytoplasm. It carries out the reaction N-terminal L-lysyl-[protein] + L-leucyl-tRNA(Leu) = N-terminal L-leucyl-L-lysyl-[protein] + tRNA(Leu) + H(+). The catalysed reaction is N-terminal L-arginyl-[protein] + L-leucyl-tRNA(Leu) = N-terminal L-leucyl-L-arginyl-[protein] + tRNA(Leu) + H(+). The enzyme catalyses L-phenylalanyl-tRNA(Phe) + an N-terminal L-alpha-aminoacyl-[protein] = an N-terminal L-phenylalanyl-L-alpha-aminoacyl-[protein] + tRNA(Phe). Functions in the N-end rule pathway of protein degradation where it conjugates Leu, Phe and, less efficiently, Met from aminoacyl-tRNAs to the N-termini of proteins containing an N-terminal arginine or lysine. The protein is Leucyl/phenylalanyl-tRNA--protein transferase of Pseudomonas fluorescens (strain SBW25).